Consider the following 1138-residue polypeptide: Lysylphosphatidylglycerol biosynthesis bifunctional protein LysX (1138 aa).

Polar residues predominate over residues 1 to 15 (MALDTPSSDLPVSTD). Residues 1 to 34 (MALDTPSSDLPVSTDDTAEHQPTPAHRPPSAADR) are disordered. Residues 1–646 (MALDTPSSDL…LIAQLESEED (646 aa)) form a phosphatidylglycerol lysyltransferase region. The next 6 membrane-spanning stretches (helical) occupy residues 56-76 (IAGT…IFPL), 92-112 (IVSL…VAIA), 119-139 (IAWW…ALLL), 155-175 (IQIW…IVTY), 190-210 (ALGV…GLVW), and 247-267 (IVID…AATV). The lysine--tRNA ligase stretch occupies residues 647-1138 (RTAVEVHRPE…AFPMVKPTDA (492 aa)). The OB DNA-binding region spans 698 to 772 (VTIAGRVTKM…GELSVLIDAW (75 aa)). The Mg(2+) site is built by aspartate 1048 and glutamate 1055.

The protein in the N-terminal section; belongs to the LPG synthetase family. In the C-terminal section; belongs to the class-II aminoacyl-tRNA synthetase family. It depends on Mg(2+) as a cofactor.

It localises to the cell membrane. The enzyme catalyses tRNA(Lys) + L-lysine + ATP = L-lysyl-tRNA(Lys) + AMP + diphosphate. The catalysed reaction is L-lysyl-tRNA(Lys) + a 1,2-diacyl-sn-glycero-3-phospho-(1'-sn-glycerol) = a 1,2-diacyl-sn-glycero-3-phospho-1'-(3'-O-L-lysyl)-sn-glycerol + tRNA(Lys). In terms of biological role, catalyzes the production of L-lysyl-tRNA(Lys)transfer and the transfer of a lysyl group from L-lysyl-tRNA(Lys) to membrane-bound phosphatidylglycerol (PG), which produces lysylphosphatidylglycerol (LPG), one of the components of the bacterial membrane with a positive net charge. LPG synthesis contributes to the resistance to cationic antimicrobial peptides (CAMPs) and likely protects M.tuberculosis against the CAMPs produced by competiting microorganisms (bacteriocins). In fact, the modification of anionic phosphatidylglycerol with positively charged L-lysine results in repulsion of the peptides. The protein is Lysylphosphatidylglycerol biosynthesis bifunctional protein LysX (lysX) of Gordonia bronchialis (strain ATCC 25592 / DSM 43247 / BCRC 13721 / JCM 3198 / KCTC 3076 / NBRC 16047 / NCTC 10667) (Rhodococcus bronchialis).